The sequence spans 367 residues: 4-hydroxy-3-methylbut-2-en-1-yl diphosphate synthase (flavodoxin) (367 aa).

4 residues coordinate [4Fe-4S] cluster: C270, C273, C305, and E312.

This sequence belongs to the IspG family. It depends on [4Fe-4S] cluster as a cofactor.

It carries out the reaction (2E)-4-hydroxy-3-methylbut-2-enyl diphosphate + oxidized [flavodoxin] + H2O + 2 H(+) = 2-C-methyl-D-erythritol 2,4-cyclic diphosphate + reduced [flavodoxin]. The protein operates within isoprenoid biosynthesis; isopentenyl diphosphate biosynthesis via DXP pathway; isopentenyl diphosphate from 1-deoxy-D-xylulose 5-phosphate: step 5/6. Functionally, converts 2C-methyl-D-erythritol 2,4-cyclodiphosphate (ME-2,4cPP) into 1-hydroxy-2-methyl-2-(E)-butenyl 4-diphosphate. The protein is 4-hydroxy-3-methylbut-2-en-1-yl diphosphate synthase (flavodoxin) of Pasteurella multocida (strain Pm70).